Reading from the N-terminus, the 786-residue chain is Tyrosine-protein kinase Btk (786 aa).

A disordered region spans residues 1 to 23 (MMGTKHRNSHVNGSIKSSSSLRS). The span at 14-23 (SIKSSSSLRS) shows a compositional bias: low complexity. Positions 41–184 (DVVKSGSMVK…WIRAIRQVCE (144 aa)) constitute a PH domain. Residues 187–223 (NTPKSYRYHPGLWSGKKWSCCKGLSRTTFGCRAAAHW) form a Btk-type zinc finger. Residues His-195, Cys-206, Cys-207, and Cys-217 each coordinate Zn(2+). Residues 226-240 (ANNNPSNGSSPAQNS) are compositionally biased toward low complexity. Positions 226-301 (ANNNPSNGSS…TPTSLQPQSS (76 aa)) are disordered. The span at 241–260 (TRSISPNSSTTNSQFSLQHN) shows a compositional bias: polar residues. The span at 264–290 (SLGGGVGGGLGGGGSLGLGGGGGGGGS) shows a compositional bias: gly residues. The span at 291–301 (CTPTSLQPQSS) shows a compositional bias: polar residues. Positions 342–402 (HFVKLVVALY…PSNYVKPKAL (61 aa)) constitute an SH3 domain. The 94-residue stretch at 410-503 (WYVGDMSRQR…GLACRLKSSP (94 aa)) folds into the SH2 domain. The Protein kinase domain occupies 526-779 (LMLMEELGSG…FRVLMDQLAL (254 aa)). ATP is bound by residues 532 to 540 (LGSGQFGVV) and Lys-554. Residue Asp-647 is the Proton acceptor of the active site. Tyr-677 carries the phosphotyrosine; by autocatalysis modification.

This sequence belongs to the protein kinase superfamily. Tyr protein kinase family. TEC subfamily. It depends on Zn(2+) as a cofactor. As to expression, ring canals in the egg chambers and imaginal disks of third-instar larvae.

The enzyme catalyses L-tyrosyl-[protein] + ATP = O-phospho-L-tyrosyl-[protein] + ADP + H(+). Required for proper ring canal development. Also required for the development of male genitalia and for adult survival. The polypeptide is Tyrosine-protein kinase Btk (Drosophila melanogaster (Fruit fly)).